The sequence spans 64 residues: MKQKTHKGTAKRVKITGSGKLRREQANRRHLLEGKPSKRTRRLKGTEDVAKADTKRIKRLLGKA.

Over residues 1–14 the composition is skewed to basic residues; it reads MKQKTHKGTAKRVK. The disordered stretch occupies residues 1 to 50; it reads MKQKTHKGTAKRVKITGSGKLRREQANRRHLLEGKPSKRTRRLKGTEDVA. The segment covering 21–36 has biased composition (basic and acidic residues); that stretch reads LRREQANRRHLLEGKP.

It belongs to the bacterial ribosomal protein bL35 family.

The chain is Large ribosomal subunit protein bL35 from Corynebacterium diphtheriae (strain ATCC 700971 / NCTC 13129 / Biotype gravis).